The chain runs to 428 residues: UPF0229 protein YeaH (428 aa).

The segment covering 78–90 (GNDHFIQNDRIER) has biased composition (basic and acidic residues). The interval 78-111 (GNDHFIQNDRIERPQGGGGGGSGSGQGQASQDGE) is disordered. Residues 92-103 (QGGGGGGSGSGQ) show a composition bias toward gly residues.

It belongs to the UPF0229 family.

The sequence is that of UPF0229 protein YeaH from Salmonella choleraesuis (strain SC-B67).